The following is a 297-amino-acid chain: Probable deoxyhypusine synthase (297 aa).

K265 serves as the catalytic Nucleophile.

The protein belongs to the deoxyhypusine synthase family. Requires NAD(+) as cofactor.

The catalysed reaction is [eIF5A protein]-L-lysine + spermidine = [eIF5A protein]-deoxyhypusine + propane-1,3-diamine. It functions in the pathway protein modification; eIF5A hypusination. In terms of biological role, catalyzes the NAD-dependent oxidative cleavage of spermidine and the subsequent transfer of the butylamine moiety of spermidine to the epsilon-amino group of a specific lysine residue of the eIF-5A precursor protein to form the intermediate deoxyhypusine residue. This chain is Probable deoxyhypusine synthase, found in Methanopyrus kandleri (strain AV19 / DSM 6324 / JCM 9639 / NBRC 100938).